Consider the following 96-residue polypeptide: Glycine-rich protein DC7.1 (96 aa).

A signal peptide spans 1–25 (MGSKIFLLLGLSIAFALLISSEVAA). The interval 29 to 66 (SETTTEGASLDGGHHGGGGGGHYSGGGGHGGSHHGGGG) is disordered. 2 consecutive repeat copies span residues 42-50 (HHGGGGGGH) and 61-67 (HHGGGGH). The interval 42–67 (HHGGGGGGHYSGGGGHGGSHHGGGGH) is 2 approximate repeats of H-H-G(4,6)-H. The segment covering 43–66 (HGGGGGGHYSGGGGHGGSHHGGGG) has biased composition (gly residues).

This sequence belongs to the GRP family.

In terms of biological role, may be connected with the initiation of embryogenesis or with the metabolic changes produced by the removal of auxins. This chain is Glycine-rich protein DC7.1, found in Daucus carota (Wild carrot).